The primary structure comprises 624 residues: Probable potassium transport system protein Kup (624 aa).

Helical transmembrane passes span 13 to 33 (LALG…LYTM), 52 to 72 (ILSL…VLVI), 102 to 122 (WIIM…SLIT), 139 to 159 (PALH…LFAI), 170 to 190 (LFGP…AIGI), 208 to 228 (FFMT…LAIT), 249 to 269 (WFGF…ALLL), 291 to 311 (MVAL…SGAF), 339 to 359 (IYIP…VLGF), 368 to 388 (AYGI…ALLM), 399 to 419 (TLVA…ANAV), and 421 to 441 (IPEG…ILVT).

This sequence belongs to the HAK/KUP transporter (TC 2.A.72) family.

Its subcellular location is the cell inner membrane. The catalysed reaction is K(+)(in) + H(+)(in) = K(+)(out) + H(+)(out). Transport of potassium into the cell. Likely operates as a K(+):H(+) symporter. This chain is Probable potassium transport system protein Kup, found in Thiobacillus denitrificans (strain ATCC 25259 / T1).